The primary structure comprises 49 residues: Large ribosomal subunit protein bL33B (49 aa).

Belongs to the bacterial ribosomal protein bL33 family.

The sequence is that of Large ribosomal subunit protein bL33B (rpmG2) from Lactococcus lactis subsp. cremoris (Streptococcus cremoris).